We begin with the raw amino-acid sequence, 321 residues long: Porin Omp2a (321 aa).

A signal peptide spans 1–22 (MNIKSLLLGSAAALVAASGAQA).

Belongs to the alphaproteobacteria porin family. In terms of assembly, monomer.

Its subcellular location is the cell outer membrane. In terms of biological role, forms passive diffusion pores that allow small molecular weight hydrophilic materials across the outer membrane. The polypeptide is Porin Omp2a (omp2a) (Brucella abortus (strain S19)).